We begin with the raw amino-acid sequence, 578 residues long: Potassium-transporting ATPase potassium-binding subunit (578 aa).

A run of 11 helical transmembrane segments spans residues 3 to 23 (AAALAEIAAFFGLLTAAAVPL), 67 to 87 (AAAALTFNAAGLLAVFALERL), 95 to 115 (PAGLPAVSPLVAWNTAVSFAT), 136 to 156 (ALTVQNFLSAATGISVLAALV), 181 to 201 (LLLPLAAALALLLAWQGVPQT), 264 to 284 (LEALSILLVPAALCFAFGALV), 291 to 311 (WTVYSAMLAILVPLTVATVSA), 396 to 416 (GLYGMLLFAILAVFLAGLMVG), 436 to 456 (LAILAPSATVLLGTAAACLLP), 504 to 524 (VAMLVGRYWVMLPVLAIAGAF), and 543 to 563 (LFAGLLVATVLLVGALTFLPA).

It belongs to the KdpA family. The system is composed of three essential subunits: KdpA, KdpB and KdpC.

Its subcellular location is the cell inner membrane. Its function is as follows. Part of the high-affinity ATP-driven potassium transport (or Kdp) system, which catalyzes the hydrolysis of ATP coupled with the electrogenic transport of potassium into the cytoplasm. This subunit binds the periplasmic potassium ions and delivers the ions to the membrane domain of KdpB through an intramembrane tunnel. This is Potassium-transporting ATPase potassium-binding subunit from Anaeromyxobacter dehalogenans (strain 2CP-C).